The chain runs to 368 residues: MSVKKLENGQYQVDVSFGFDPITGERIRTRPVASTRKEALELEAKLRREFQEERARKSRSVSFPTLISIYLASCEIDSKPNYYQNQKYIINKHISDYFLKSDIQKITHREITDFRKHLMETGLSNKSVNNIMTSLSKIFDTAVHEEILKRNPCDNVKRLPLTRKKMKFWRPEEFKKFISLIPQDQLLFKTFYTVAFLTGLRCGEMLALQWKDIDKILLEIDVHKSCTWLDGQFVVTTPKTKNSIRRVSINKKLLKLLERWKEAQEELFNELGIRHSHDTYIFQYKDTPSRKDIFSRKIKYFCKDSDLTPIRLHDFRHSHVALLIHQGEDYITIKERLGHGSVKTTIDVYGHLYPNKQKEMADKLDDLL.

Residues 61–143 (VSFPTLISIY…SLSKIFDTAV (83 aa)) form the Core-binding (CB) domain. The 199-residue stretch at 164–362 (KKMKFWRPEE…YPNKQKEMAD (199 aa)) folds into the Tyr recombinase domain. Active-site residues include Arg-201, Lys-239, His-313, Arg-316, and His-339. The active-site O-(3'-phospho-DNA)-tyrosine intermediate is the Tyr-349.

It belongs to the 'phage' integrase family.

In terms of biological role, putative integrase that is involved in the insertion of the integrative and conjugative element ICEBs1. Required for the excision of ICEBs1 from the donor cell genome and subsequent integration in the recipient cell genome. Appears not to be transferred through the mating pore. Integration of ICEBs1 involves an attachment site in the chromosome, attB, and a site in the circular form of ICEBs1, attICEBs1. This Bacillus subtilis (strain 168) protein is ICEBs1 integrase (int).